A 208-amino-acid chain; its full sequence is Small ribosomal subunit protein uS4B (208 aa).

In terms of domain architecture, S4 RNA-binding spans 95–160 (KRLDNVVFRL…NQVYMAAKQA (66 aa)).

This sequence belongs to the universal ribosomal protein uS4 family. In terms of assembly, part of the 30S ribosomal subunit. Contacts protein S5. The interaction surface between S4 and S5 is involved in control of translational fidelity.

One of the primary rRNA binding proteins, it binds directly to 16S rRNA where it nucleates assembly of the body of the 30S subunit. Functionally, with S5 and S12 plays an important role in translational accuracy. This is Small ribosomal subunit protein uS4B from Bdellovibrio bacteriovorus (strain ATCC 15356 / DSM 50701 / NCIMB 9529 / HD100).